The following is a 316-amino-acid chain: Retinol dehydrogenase 12 (316 aa).

46–52 (GANTGIG) is an NADP(+) binding site. Ser175 is a binding site for substrate. Tyr200 serves as the catalytic Proton acceptor.

Belongs to the short-chain dehydrogenases/reductases (SDR) family. Widely expressed, mostly in retina, kidney, brain, skeletal muscle, pancreas and stomach.

Its subcellular location is the endoplasmic reticulum membrane. It carries out the reaction all-trans-retinol + NADP(+) = all-trans-retinal + NADPH + H(+). The catalysed reaction is 11-cis-retinol + NADP(+) = 11-cis-retinal + NADPH + H(+). The enzyme catalyses 9-cis-retinol + NADP(+) = 9-cis-retinal + NADPH + H(+). It catalyses the reaction a 4-hydroxynonen-1-ol + NADP(+) = a 4-hydroxynonenal + NADPH + H(+). It carries out the reaction (E)-non-2-en-1-ol + NADP(+) = (E)-non-2-enal + NADPH + H(+). The catalysed reaction is (Z)-non-6-en-1-ol + NADP(+) = (Z)-non-6-enal + NADPH + H(+). The enzyme catalyses nonan-1-ol + NADP(+) = nonanal + NADPH + H(+). The protein operates within cofactor metabolism; retinol metabolism. Retinoids dehydrogenase/reductase with a clear preference for NADP. Displays high activity towards 9-cis, 11-cis and all-trans-retinal. Shows very weak activity towards 13-cis-retinol. Also exhibits activity, albeit with lower affinity than for retinaldehydes, towards lipid peroxidation products (C9 aldehydes) such as 4-hydroxynonenal and trans-2-nonenal. May play an important function in photoreceptor cells to detoxify 4-hydroxynonenal and potentially other toxic aldehyde products resulting from lipid peroxidation. Has no dehydrogenase activity towards steroids. The protein is Retinol dehydrogenase 12 (RDH12) of Homo sapiens (Human).